Here is a 1503-residue protein sequence, read N- to C-terminus: Mitogen-activated protein kinase-binding protein 1 (1503 aa).

12 WD repeats span residues 89-130, 133-174, 176-214, 271-310, 337-376, 382-431, 472-511, 514-556, 560-601, 609-648, 654-693, and 696-735; these read SSRK…QVAE, EHKY…VVAS, KVSSRVTAVSFSEDCSYFVTAGNRHIKFWYLDDSKTSKV, VELRTTVAHCISVTQEYIFCGCADGTVRLFNPSNLHFLST, ARYPDTIALTFDPTNQWLSCVYNDHSIYVWDVRDPKKVGK, YHSS…VHGS, DPRVGIRSVCISPNGQHLASGDRMGTLRIHELQSLSEMLK, AHDS…SLQQ, EHSS…EGVQ, VRKTTLYDMDVEPSWKYTAIGCQDRNIRIFNISSGKQKKL, GEDGTLIKVQTDPSGIYIATSCSDKNLSIFDFSSGECVAT, and GHSEIVTGMKFSNDCKHLISVSGDSCIFVWRLSSEMTISM. 3 disordered regions span residues 745–817, 874–917, and 951–1176; these read RQRG…SSPA, LAPS…RLQT, and VYPE…SWAS. Residues 784–796 show a composition bias toward acidic residues; the sequence is KEGEDEGTEEEEL. 2 stretches are compositionally biased toward polar residues: residues 905–917 and 957–972; these read CVSQNERAPRLQT and DSPTMDTSAFQVQAPT. Positions 1028 to 1043 are enriched in acidic residues; that stretch reads DLEEPAEGDEDEEEEG. The span at 1058-1068 shows a compositional bias: basic and acidic residues; sequence PDQEQFLKQHF. Positions 1089–1129 are enriched in polar residues; that stretch reads SQSISSRFLLQVQTSPLREPSLSSSGLALTSRPDQVSQVSG. Position 1193 is a phosphoserine (Ser-1193). Disordered stretches follow at residues 1217–1238 and 1369–1391; these read QGSLGSLPQAGGCSSQPHSYQN and QGPESLQPLSPEKTRNPVESSRP.

As to quaternary structure, can form homodimers (via C-terminus). Interacts (via C-terminus) with WDR62 (via C-terminus). Interacts with MAPK9. Interacts (via N-terminus) with NOD2; the interaction is enhanced in presence of muramyl dipeptide (MDP). Interacts with MAPK10. Ubiquitously expressed. Highest expression observed in brain.

Its subcellular location is the cytoplasm. It localises to the nucleus. The protein resides in the cytoskeleton. The protein localises to the spindle pole. In terms of biological role, negative regulator of NOD2 function. It down-regulates NOD2-induced processes such as activation of NF-kappa-B signaling, IL8 secretion and antibacterial response. Involved in JNK signaling pathway. The polypeptide is Mitogen-activated protein kinase-binding protein 1 (Mapkbp1) (Mus musculus (Mouse)).